The sequence spans 302 residues: Elongation factor Ts (302 aa).

Residues 80–83 (TDFV) form an involved in Mg(2+) ion dislocation from EF-Tu region.

The protein belongs to the EF-Ts family.

It localises to the cytoplasm. Its function is as follows. Associates with the EF-Tu.GDP complex and induces the exchange of GDP to GTP. It remains bound to the aminoacyl-tRNA.EF-Tu.GTP complex up to the GTP hydrolysis stage on the ribosome. This is Elongation factor Ts from Methylibium petroleiphilum (strain ATCC BAA-1232 / LMG 22953 / PM1).